Consider the following 134-residue polypeptide: Small ribosomal subunit protein uS11 (134 aa).

Belongs to the universal ribosomal protein uS11 family. As to quaternary structure, part of the 30S ribosomal subunit. Interacts with proteins S7 and S18. Binds to IF-3.

Functionally, located on the platform of the 30S subunit, it bridges several disparate RNA helices of the 16S rRNA. Forms part of the Shine-Dalgarno cleft in the 70S ribosome. This chain is Small ribosomal subunit protein uS11, found in Parafrankia sp. (strain EAN1pec).